Consider the following 104-residue polypeptide: Iron-sulfur cluster assembly protein CyaY (104 aa).

Belongs to the frataxin family.

Involved in iron-sulfur (Fe-S) cluster assembly. May act as a regulator of Fe-S biogenesis. In Aliivibrio fischeri (strain MJ11) (Vibrio fischeri), this protein is Iron-sulfur cluster assembly protein CyaY.